Here is a 361-residue protein sequence, read N- to C-terminus: Prostaglandin D2 receptor (361 aa).

Residues 1-21 (MRPLFYRCHNTTSVEKGNSAT) are Extracellular-facing. Asn-10 carries N-linked (GlcNAc...) asparagine glycosylation. A helical transmembrane segment spans residues 22-42 (MGGVLFSTGLVGNLLALGLLA). Over 43 to 58 (RSGLGSCPPRSPRPPP) the chain is Cytoplasmic. Residues 59–79 (SVFYVLVFGLTITDLLGKCLV) traverse the membrane as a helical segment. The Extracellular portion of the chain corresponds to 80-107 (SPFVLSAYAQNRSLRELVPGSDSSLCQA). The N-linked (GlcNAc...) asparagine glycan is linked to Asn-90. Residues Cys-105 and Cys-183 are joined by a disulfide bond. The chain crosses the membrane as a helical span at residues 108–128 (FAFIMSFFGLASTLQLLAMAL). Over 129–150 (ECWLSLGHPFFHRRHLTPRRGA) the chain is Cytoplasmic. Residues 151–171 (MVAPVVGAFCLAFCALPLVGF) traverse the membrane as a helical segment. The Extracellular portion of the chain corresponds to 172–195 (GKFVQYCPGTWCFFQMVHEERSLS). The helical transmembrane segment at 196 to 216 (VLSYSVLYASLMLLLVLAIVL) threads the bilayer. At 217 to 262 (CNLSAMRNLYAMHLRLRGLLRPGSRERAEPGAGEREATPLHLEELD) the chain is on the cytoplasmic side. A helical membrane pass occupies residues 263–283 (HLLLLALMTVLFTMCSLPLIY). The Extracellular portion of the chain corresponds to 284–310 (RAYYGAFKAVPEQNGTTEETEDLRALR). N-linked (GlcNAc...) asparagine glycosylation occurs at Asn-297. Residues 311–331 (FLSVISIVDPWIFIIFRTSVF) form a helical membrane-spanning segment. At 332–361 (RMFFRKIFIRPLIYRNWHSNSCQTNMESSL) the chain is on the cytoplasmic side.

This sequence belongs to the G-protein coupled receptor 1 family.

The protein localises to the cell membrane. Its function is as follows. Receptor for prostaglandin D2 (PGD2). The activity of this receptor is mainly mediated by G(s) proteins that stimulate adenylate cyclase, resulting in an elevation of intracellular cAMP. A mobilization of calcium is also observed, but without formation of inositol 1,4,5-trisphosphate. Involved in PLA2G3-dependent maturation of mast cells. PLA2G3 is secreted by immature mast cells and acts on nearby fibroblasts upstream to PTDGS to synthesize PGD2, which in turn promotes mast cell maturation and degranulation via PTGDR. This Bos taurus (Bovine) protein is Prostaglandin D2 receptor (PTGDR).